Consider the following 1251-residue polypeptide: Immunoglobulin-like and fibronectin type III domain-containing protein 1 (1251 aa).

An Ig-like 1 domain is found at 29 to 119 (PDFEQKPVTS…GEAACSVRLT (91 aa)). The tract at residues 61 to 81 (RWQNSKGDLSDSSKYKISSSP) is disordered. The stretch at 188 to 221 (IVDYRGMLRRLQEMKKEQEDKMAQYINTISSLRH) forms a coiled coil. The Ig-like 2 domain maps to 309–398 (PRVVVPLAET…SSAWLVVEAG (90 aa)). Residues 403-433 (LQSTSADHKLQSRRSGKDGRLDIYGERRDAT) are compositionally biased toward basic and acidic residues. Positions 403–454 (LQSTSADHKLQSRRSGKDGRLDIYGERRDATRSSTSRYKPGTGSFSKDAQGP) are disordered. Over residues 434–449 (RSSTSRYKPGTGSFSK) the composition is skewed to polar residues. Positions 454-539 (PMGHFSQGLA…GDQQSEATLT (86 aa)) constitute an Ig-like 3 domain. 3 Fibronectin type-III domains span residues 646–741 (PPQG…VAPE), 746–845 (APSA…MRPP), and 847–942 (LVRN…AMPV). The Ig-like 4 domain maps to 946 to 1030 (PKFLVDSSTK…LRTLQGKEVA (85 aa)). Residues 1043-1137 (APGPIHLQEN…TSQPWCIPRQ (95 aa)) enclose the Fibronectin type-III 4 domain. Residues 1151 to 1245 (PDLSQKPRFL…GQAVSTATLI (95 aa)) form the Ig-like 5 domain.

In terms of assembly, interacts with FLNC. Interacts with KY. In terms of tissue distribution, expressed in skeletal muscle.

It is found in the nucleus. Its subcellular location is the cytoplasm. It localises to the myofibril. The protein localises to the sarcomere. The protein resides in the z line. This Homo sapiens (Human) protein is Immunoglobulin-like and fibronectin type III domain-containing protein 1 (IGFN1).